The sequence spans 39 residues: Gonadal protein gdl-ORF39 (39 aa).

In bundles of maturing sperm of larval, pupal and adult males.

This Drosophila melanogaster (Fruit fly) protein is Gonadal protein gdl-ORF39 (gdl-ORF39).